The following is an 818-amino-acid chain: Phosphoinositide phosphatase SAC3 (818 aa).

Positions 153-546 (LCMVDLTKDF…GDTLAHQYGG (394 aa)) constitute an SAC domain. The disordered stretch occupies residues 426 to 459 (SLSSSSDADTGDISPHTSSDDDNGDHDSLEKKSS). The Phosphatase catalytic core signature appears at 482-493 (RTNCIDCLDRTN). Residues 759–780 (LTAETSSTENSVNGVGQSAPTI) are compositionally biased toward polar residues. Residues 759-800 (LTAETSSTENSVNGVGQSAPTISESGSSSSKGKEPMGTKIRE) form a disordered region. Residues 789 to 800 (KGKEPMGTKIRE) show a composition bias toward basic and acidic residues.

In terms of assembly, component of the PI(3,5)P2 regulatory complex at least composed of ATG18, SAC/FIG4, FAB1 and VAC14. The cofactor is Mg(2+). In terms of tissue distribution, ubiquitous with a higher level of expression in young seedlings than in other tissues.

It is found in the vacuole membrane. It catalyses the reaction a 1,2-diacyl-sn-glycero-3-phospho-(1D-myo-inositol-3,5-bisphosphate) + H2O = a 1,2-diacyl-sn-glycero-3-phospho-(1D-myo-inositol-3-phosphate) + phosphate. Functionally, the PI(3,5)P2 regulatory complex regulates both the synthesis and turnover of phosphatidylinositol 3,5-bisphosphate (PtdIns(3,5)P2). The polypeptide is Phosphoinositide phosphatase SAC3 (SAC3) (Arabidopsis thaliana (Mouse-ear cress)).